The primary structure comprises 119 residues: Large ribosomal subunit protein uL18 (119 aa).

The protein belongs to the universal ribosomal protein uL18 family. As to quaternary structure, part of the 50S ribosomal subunit; part of the 5S rRNA/L5/L18/L25 subcomplex. Contacts the 5S and 23S rRNAs.

In terms of biological role, this is one of the proteins that bind and probably mediate the attachment of the 5S RNA into the large ribosomal subunit, where it forms part of the central protuberance. The chain is Large ribosomal subunit protein uL18 from Staphylococcus aureus (strain bovine RF122 / ET3-1).